Consider the following 45-residue polypeptide: Mu-conotoxin-like Cal 12.1.1d (45 aa).

Cystine bridges form between C3–C16, C11–C28, C18–C33, and C27–C39. W17 is modified (6'-bromotryptophan). Residue E21 is modified to 4-carboxyglutamate. At P23 the chain carries 4-hydroxyproline. W37 and W38 each carry 6'-bromotryptophan. P40 carries the post-translational modification 4-hydroxyproline. W44 bears the 6'-bromotryptophan mark.

As to expression, expressed by the venom duct.

It localises to the secreted. Its function is as follows. Mu-conotoxins block voltage-gated sodium channels. This toxin reversibly blocks voltage-gated sodium channel in cephalopods, with no alteration in the voltage dependence of sodium conductance or on the kinetics of inactivation. The chain is Mu-conotoxin-like Cal 12.1.1d from Californiconus californicus (California cone).